The chain runs to 346 residues: UPF0718 protein YraQ (346 aa).

The next 9 helical transmembrane spans lie at 12–32 (PIQW…LWYV), 71–91 (MIYF…GSLI), 113–133 (LLGT…APVA), 146–166 (ALAF…FMGF), 167–187 (VLGW…VLLI), 223–243 (ALWT…LVLG), 260–280 (SLMW…PTAA), 296–316 (APAL…LIML), and 326–346 (WLTG…ALLF).

Belongs to the UPF0718 family.

It is found in the cell membrane. The protein is UPF0718 protein YraQ (yraQ) of Escherichia coli (strain K12).